We begin with the raw amino-acid sequence, 260 residues long: Snake venom serine protease homolog 1 (260 aa).

Positions 1-18 are cleaved as a signal peptide; it reads MVLIRVLANLLILQLSYA. Residues 19–24 constitute a propeptide that is removed on maturation; that stretch reads QKSSEL. The Peptidase S1 domain maps to 25 to 251; it reads IIGGDECNIN…HLDWIKSIIA (227 aa). Cystine bridges form between Cys31-Cys165, Cys52-Cys68, Cys100-Cys258, Cys144-Cys212, Cys176-Cys191, and Cys202-Cys227. Asn83, Asn123, and Asn124 each carry an N-linked (GlcNAc...) asparagine glycan.

Belongs to the peptidase S1 family. Snake venom subfamily. Expressed by the venom gland.

It is found in the secreted. Functionally, snake venom serine protease homolog that may act in the hemostasis system of the prey. The protein is Snake venom serine protease homolog 1 of Trimeresurus stejnegeri (Chinese green tree viper).